Here is a 41-residue protein sequence, read N- to C-terminus: MDWRVLIVLAPVIIAGSWALFNIGAAAIRQVQEFLNRDKLA.

Residues 5 to 23 (VLIVLAPVIIAGSWALFNI) traverse the membrane as a helical segment.

This sequence belongs to the PsbY family. In terms of assembly, PSII is composed of 1 copy each of membrane proteins PsbA, PsbB, PsbC, PsbD, PsbE, PsbF, PsbH, PsbI, PsbJ, PsbK, PsbL, PsbM, PsbT, PsbX, PsbY, PsbZ, Psb30/Ycf12, peripheral proteins PsbO, CyanoQ (PsbQ), PsbU, PsbV and a large number of cofactors. It forms dimeric complexes.

It localises to the cellular thylakoid membrane. Its function is as follows. Loosely associated component of the core of photosystem II (PSII), it is not always seen in crystals. PSII is a light-driven water plastoquinone oxidoreductase, using light energy to abstract electrons from H(2)O, generating a proton gradient subsequently used for ATP formation. This Gloeothece citriformis (strain PCC 7424) (Cyanothece sp. (strain PCC 7424)) protein is Photosystem II reaction center protein Y.